Reading from the N-terminus, the 226-residue chain is Probable N-acetyl-alpha-D-glucosaminyl L-malate deacetylase 2 (226 aa).

The Zn(2+) site is built by His-13, Asp-16, and His-127.

This sequence belongs to the PIGL family. It depends on Zn(2+) as a cofactor.

It catalyses the reaction (S)-malyl N-acetyl-alpha-D-glucosaminide + H2O = (S)-malyl alpha-D-glucosaminide + acetate. Involved in bacillithiol (BSH) biosynthesis. Catalyzes the second step of the pathway, the deacetylation of N-acetylglucosaminylmalate (GlcNAc-Mal) to glucosamine malate (GlcN-Mal). Could also be involved in bacillithiol-detoxifying pathways through formation of S-mercapturic adducts. The chain is Probable N-acetyl-alpha-D-glucosaminyl L-malate deacetylase 2 from Bacillus anthracis.